The following is a 360-amino-acid chain: Chorismate synthase (360 aa).

NADP(+) contacts are provided by arginine 48 and arginine 54. FMN contacts are provided by residues 125-127 (RSS), 246-247 (NA), glycine 286, 301-305 (KPTSS), and arginine 327.

This sequence belongs to the chorismate synthase family. In terms of assembly, homotetramer. It depends on FMNH2 as a cofactor.

The enzyme catalyses 5-O-(1-carboxyvinyl)-3-phosphoshikimate = chorismate + phosphate. The protein operates within metabolic intermediate biosynthesis; chorismate biosynthesis; chorismate from D-erythrose 4-phosphate and phosphoenolpyruvate: step 7/7. Functionally, catalyzes the anti-1,4-elimination of the C-3 phosphate and the C-6 proR hydrogen from 5-enolpyruvylshikimate-3-phosphate (EPSP) to yield chorismate, which is the branch point compound that serves as the starting substrate for the three terminal pathways of aromatic amino acid biosynthesis. This reaction introduces a second double bond into the aromatic ring system. The sequence is that of Chorismate synthase from Actinobacillus pleuropneumoniae serotype 7 (strain AP76).